Here is a 293-residue protein sequence, read N- to C-terminus: MDLGKVITAMVTPIHPEKDKVCKKRIHHLVNHLIKNGSDGLVIAGTTGESPTLSHDEKIKLFRQVIETNDGRAKLIAGTGSNNTAETIAFTKEVATLGGMDAVLIVAPYYNKPNQDGLYAHFAAVAEASDLPVVIYNIPGRSVVNIEPETIIRLAKLPNIVGVKESSGNLDNISKIIAETSDDFQVYSGDDSLTLPILAVGGNGVISVASHIVGNEMQEMIQAFERGEVQKAAQIHRELLPLMNGLFSVPNPAPTKYLLNQQGISVGPVRLPLVDLNAEQGTKLQAILEGLSK.

Pyruvate is bound at residue Thr-47. Tyr-136 functions as the Proton donor/acceptor in the catalytic mechanism. The Schiff-base intermediate with substrate role is filled by Lys-164. Ile-206 contacts pyruvate.

The protein belongs to the DapA family. In terms of assembly, homotetramer; dimer of dimers.

Its subcellular location is the cytoplasm. The catalysed reaction is L-aspartate 4-semialdehyde + pyruvate = (2S,4S)-4-hydroxy-2,3,4,5-tetrahydrodipicolinate + H2O + H(+). It participates in amino-acid biosynthesis; L-lysine biosynthesis via DAP pathway; (S)-tetrahydrodipicolinate from L-aspartate: step 3/4. Its function is as follows. Catalyzes the condensation of (S)-aspartate-beta-semialdehyde [(S)-ASA] and pyruvate to 4-hydroxy-tetrahydrodipicolinate (HTPA). The polypeptide is 4-hydroxy-tetrahydrodipicolinate synthase (Listeria monocytogenes serovar 1/2a (strain ATCC BAA-679 / EGD-e)).